Consider the following 336-residue polypeptide: Glyceraldehyde-3-phosphate dehydrogenase (336 aa).

Residues 12 to 13 (RI), Asp-34, and Arg-79 contribute to the NAD(+) site. D-glyceraldehyde 3-phosphate-binding positions include 150–152 (SCT), Thr-181, 210–211 (TG), and Arg-233. Cys-151 acts as the Nucleophile in catalysis. Asn-315 is a binding site for NAD(+).

It belongs to the glyceraldehyde-3-phosphate dehydrogenase family. As to quaternary structure, homotetramer.

Its subcellular location is the cytoplasm. The catalysed reaction is D-glyceraldehyde 3-phosphate + phosphate + NAD(+) = (2R)-3-phospho-glyceroyl phosphate + NADH + H(+). The protein operates within carbohydrate degradation; glycolysis; pyruvate from D-glyceraldehyde 3-phosphate: step 1/5. In terms of biological role, involved in osmoadaptation. In Emericella nidulans (strain FGSC A4 / ATCC 38163 / CBS 112.46 / NRRL 194 / M139) (Aspergillus nidulans), this protein is Glyceraldehyde-3-phosphate dehydrogenase (gpdA).